The chain runs to 556 residues: Urocanate hydratase (556 aa).

NAD(+)-binding positions include 52 to 53 (GG), Gln130, 176 to 178 (GMG), Glu196, Arg201, 242 to 243 (NA), 263 to 267 (QTSAH), 273 to 274 (YL), and Tyr322. Cys410 is a catalytic residue. NAD(+) is bound at residue Gly492.

Belongs to the urocanase family. NAD(+) is required as a cofactor.

It localises to the cytoplasm. It catalyses the reaction 4-imidazolone-5-propanoate = trans-urocanate + H2O. It participates in amino-acid degradation; L-histidine degradation into L-glutamate; N-formimidoyl-L-glutamate from L-histidine: step 2/3. Its function is as follows. Catalyzes the conversion of urocanate to 4-imidazolone-5-propionate. The chain is Urocanate hydratase from Shewanella sp. (strain ANA-3).